We begin with the raw amino-acid sequence, 250 residues long: Alpha/beta hydrolase nvfD (250 aa).

Residues D198 and H226 each act as charge relay system in the active site.

Belongs to the AB hydrolase superfamily.

It functions in the pathway secondary metabolite biosynthesis; terpenoid biosynthesis. Functionally, alpha/beta hydrolase; part of the gene cluster that mediates the biosynthesis of novofumigatonin, a heavily oxygenated meroterpenoid containing a unique orthoester moiety. The first step of the pathway is the synthesis of 3,5-dimethylorsellinic acid (DMOA) by the polyketide synthase nvfA via condensation of one acetyl-CoA starter unit with 3 malonyl-CoA units and 2 methylations. DMOA is then converted to farnesyl-DMOA by the farnesyltransferase nvfB. Epoxydation by FAD-dependent monooxygenase nvfK, followed by a protonation-initiated cyclization catalyzed by the terpene cyclase nvfL leads to the production of asnavolin H. The short chain dehydrogenase nvfC then as a 3-OH dehydrogenase of asnovolin H to yield chemesin D. There are two branches to synthesize asnovolin A from chemesin D. In one branch, chemesin D undergoes Baeyer-Villiger oxidation by nvfH, methylation by nvfJ, and enoyl reduction by the nvfM D enoylreductase that reduces the double bond between C-5'and C-6', to form respectively asnovolin I, asnovolin K, and asnovolin A. In the other branch, the methylation precedes the Baeyer-Villiger oxidation and the enoyl reduction to yield asnovolin A via the asnovolin J intermediate. Asnovolin A is further converted to fumigatonoid A by the Fe(II)/2-oxoglutarate-dependent dioxygenase nvfI that catalyzes an endoperoxidation reaction. The alpha/beta hydrolase nvfD then acts as an epimerase that converts fumigatonoid A to its C-5' epimer, which then undergoes spontaneous or nvfD-catalyzed lactonization. The following step utilizes the ketoreductase nvfG to produce fumigatonoid B. The dioxygenase nvfE further converts fumigatonoid B into fumigatonoid C. Finally the Fe(II)/2-oxoglutarate-dependent dioxygenase nvfF catalyzes two rounds of oxidation to transform fumigatonoid C into the end product, novofumigatonin A. The protein is Alpha/beta hydrolase nvfD of Aspergillus novofumigatus (strain IBT 16806).